The sequence spans 188 residues: GTP-dependent dephospho-CoA kinase (188 aa).

GTP-binding residues include aspartate 43, valine 44, aspartate 62, glutamate 121, and aspartate 144.

It belongs to the GTP-dependent DPCK family.

It carries out the reaction 3'-dephospho-CoA + GTP = GDP + CoA + H(+). It functions in the pathway cofactor biosynthesis; coenzyme A biosynthesis. In terms of biological role, catalyzes the GTP-dependent phosphorylation of the 3'-hydroxyl group of dephosphocoenzyme A to form coenzyme A (CoA). The polypeptide is GTP-dependent dephospho-CoA kinase (Methanococcoides burtonii (strain DSM 6242 / NBRC 107633 / OCM 468 / ACE-M)).